A 179-amino-acid polypeptide reads, in one-letter code: M-phase-specific PLK1-interacting protein (179 aa).

A disordered region spans residues 1-135 (MQRQNFRPPT…RVREKRMSNE (135 aa)). Arg37 is modified (asymmetric dimethylarginine). Phosphoserine is present on residues Ser40 and Ser47. The residue at position 51 (Thr51) is a Phosphothreonine. Arg57 carries the omega-N-methylarginine modification. Asymmetric dimethylarginine is present on residues Arg59 and Arg68. Residues 60 to 71 (PYGSSHSPRHGG) are compositionally biased toward low complexity. Position 72 is a phosphoserine (Ser72). Position 77 is an asymmetric dimethylarginine (Arg77). Over residues 79–109 (GSPSPGGYPGSYSRSPAGSQQQFGYSPGQQQ) the composition is skewed to low complexity. Phosphoserine is present on residues Ser80, Ser82, Ser93, Ser104, and Ser115. The span at 110 to 122 (THPQGSPRTSTPF) shows a compositional bias: polar residues. Arg117 carries the omega-N-methylarginine modification. Phosphothreonine is present on Thr120. Residues Ser124 and Ser133 each carry the phosphoserine modification.

As to quaternary structure, interacts with PLK1; phosphorylation-dependent. Phosphorylated during mitosis in the cell cycle probably by CDK1. In terms of tissue distribution, expressed at highest levels in liver and kidney; intermediate expression in skeletal muscle, pancreas, heart and placenta; low expression in brain and lung. Expressed in epidermis and hair follicles.

The protein resides in the nucleus. The protein localises to the cytoplasm. It localises to the cytoskeleton. It is found in the microtubule organizing center. Its subcellular location is the centrosome. Its function is as follows. May play a role in maintenance of cell cycle integrity by regulating mitosis or cytokinesis. This is M-phase-specific PLK1-interacting protein (MPLKIP) from Homo sapiens (Human).